A 116-amino-acid chain; its full sequence is Large ribosomal subunit protein bL17 (116 aa).

It belongs to the bacterial ribosomal protein bL17 family. Part of the 50S ribosomal subunit. Contacts protein L32.

The chain is Large ribosomal subunit protein bL17 from Prochlorococcus marinus (strain MIT 9211).